The sequence spans 111 residues: Notch-regulated ankyrin repeat-containing protein B (111 aa).

2 ANK repeats span residues 47–76 (EGQT…DTRL) and 80–109 (DGWS…YSSS).

The protein belongs to the NRARP family.

Its function is as follows. Regulates independently canonical Wnt and Notch signaling by modulating LEF1 and Notch protein turnover. Stabilizes LEF1, a pivotal transcription factor in the Wnt signaling cascade, by blocking its ubiquitination. Involved in angiogenesis; involved in intersegmental vessel patterning during development. This chain is Notch-regulated ankyrin repeat-containing protein B (nrarpb), found in Danio rerio (Zebrafish).